Consider the following 493-residue polypeptide: NADH-quinone oxidoreductase subunit N 2 (493 aa).

Helical transmembrane passes span 16–36 (IIPAVMLALFGCAILLFDFLI), 45–65 (FLLIFVVLAEAFTGFGLFRQQ), 87–107 (GFAIFFNWIFLVAAVVVAIVS), 119–139 (GEYYSLILFAQCGMYFLATGT), 141–161 (LITLFIGLELMALCFYVMVGF), 176–196 (LLLGAFSSGFLVYGFSVMYGI), 219–239 (VFLALSTTSVGLLFKVSAVPF), 258–278 (LSVASKAASIAFLLRIFLGPL), 285–305 (WEPLLAFIAIITLTIGNLAAI), 313–333 (LLAYSSISHAGYMLLGLVAGN), 340–360 (IAVYVMVYTFMNLGAFLVIIA), 385–405 (AFLMLIFLLSLAGIPPTAGFL), 421–441 (GLAIVATLYVAVAIYYYFKIV), and 464–484 (CALALTGIATLAIGIYPEPFL).

It belongs to the complex I subunit 2 family. As to quaternary structure, NDH-1 is composed of 14 different subunits. Subunits NuoA, H, J, K, L, M, N constitute the membrane sector of the complex.

It localises to the cell inner membrane. It catalyses the reaction a quinone + NADH + 5 H(+)(in) = a quinol + NAD(+) + 4 H(+)(out). Its function is as follows. NDH-1 shuttles electrons from NADH, via FMN and iron-sulfur (Fe-S) centers, to quinones in the respiratory chain. The immediate electron acceptor for the enzyme in this species is believed to be ubiquinone. Couples the redox reaction to proton translocation (for every two electrons transferred, four hydrogen ions are translocated across the cytoplasmic membrane), and thus conserves the redox energy in a proton gradient. This chain is NADH-quinone oxidoreductase subunit N 2, found in Solibacter usitatus (strain Ellin6076).